Reading from the N-terminus, the 70-residue chain is Sec-independent protein translocase protein TatA (70 aa).

A helical transmembrane segment spans residues 1–21 (MGIGVWELLLLFLIVLVVFGT). Positions 42–70 (MSENEDKPSEGGARTLEGEVVDKKEKDKV) are disordered. The span at 57–70 (LEGEVVDKKEKDKV) shows a compositional bias: basic and acidic residues.

This sequence belongs to the TatA/E family. The Tat system comprises two distinct complexes: a TatABC complex, containing multiple copies of TatA, TatB and TatC subunits, and a separate TatA complex, containing only TatA subunits. Substrates initially bind to the TatABC complex, which probably triggers association of the separate TatA complex to form the active translocon.

It is found in the cell inner membrane. In terms of biological role, part of the twin-arginine translocation (Tat) system that transports large folded proteins containing a characteristic twin-arginine motif in their signal peptide across membranes. TatA could form the protein-conducting channel of the Tat system. The chain is Sec-independent protein translocase protein TatA from Methylococcus capsulatus (strain ATCC 33009 / NCIMB 11132 / Bath).